The primary structure comprises 192 residues: MAKAQSKQATATNTPRLKQVYNETIRKALQEQFGYDNDMQVPRLDKIVLNMGVGEATADSKKPSVAAEDLALIAGQKAVVTRARNSIAGFKVRENMPIGAKVTLRKERMYEFLDRLVNIALPRVRDFRGLNPKSFDGRGNYAMGIKEHIVFPEINYDKVDQIWGMDVIVCTTAKTDDEARALLKAFNFPFRQ.

This sequence belongs to the universal ribosomal protein uL5 family. Part of the 50S ribosomal subunit; part of the 5S rRNA/L5/L18/L25 subcomplex. Contacts the 5S rRNA and the P site tRNA. Forms a bridge to the 30S subunit in the 70S ribosome.

Functionally, this is one of the proteins that bind and probably mediate the attachment of the 5S RNA into the large ribosomal subunit, where it forms part of the central protuberance. In the 70S ribosome it contacts protein S13 of the 30S subunit (bridge B1b), connecting the 2 subunits; this bridge is implicated in subunit movement. Contacts the P site tRNA; the 5S rRNA and some of its associated proteins might help stabilize positioning of ribosome-bound tRNAs. This Mesorhizobium japonicum (strain LMG 29417 / CECT 9101 / MAFF 303099) (Mesorhizobium loti (strain MAFF 303099)) protein is Large ribosomal subunit protein uL5.